A 468-amino-acid polypeptide reads, in one-letter code: Immunoglobulin superfamily member 21 (468 aa).

Positions 1 to 24 (MRAAPSLRRASCLLLAAILDLARG) are cleaved as a signal peptide. Ig-like domains lie at 25 to 132 (YLTV…VVLA) and 344 to 429 (PKIM…TRLI). Cys46 and Cys116 are joined by a disulfide.

In terms of assembly, interacts (Ig-like 1 domain) with NRXN2 (via Laminin G-like 1 domain) in a trans-interaction manner. In terms of tissue distribution, expressed in brain.

The protein localises to the postsynaptic cell membrane. In terms of biological role, involved in synaptic inhibition in the brain. Selectively regulates inhibitory presynaptic differentiation through interacting with presynaptic NRXN2. The chain is Immunoglobulin superfamily member 21 from Rattus norvegicus (Rat).